The chain runs to 307 residues: Probable RuBisCO transcriptional regulator (307 aa).

The region spanning 5-62 (FTLQQLRIFKAIASEKSFTQAAEILFVSQPSLSKQIKTLENRLGILLLNRTGNKILLT) is the HTH lysR-type domain. The segment at residues 22 to 41 (FTQAAEILFVSQPSLSKQIK) is a DNA-binding region (H-T-H motif).

Belongs to the LysR transcriptional regulatory family.

It is found in the plastid. The protein resides in the chloroplast. Trans-acting transcriptional regulator of RuBisCO genes (rbcL and rbcS) expression. The sequence is that of Probable RuBisCO transcriptional regulator (rbcR-A) from Thalassiosira pseudonana (Marine diatom).